Reading from the N-terminus, the 2373-residue chain is Highly reducing polyketide synthase (2373 aa).

Residues 19 to 446 form the Ketosynthase family 3 (KS3) domain; it reads QEPIAVVGIA…GSNAHVIVEE (428 aa). Catalysis depends on for beta-ketoacyl synthase activity residues cysteine 192, histidine 329, and histidine 369. Residues 560-874 form a malonyl-CoA:ACP transacylase (MAT) domain region; the sequence is IFTGQGAQWP…QYTSAMARGA (315 aa). The For malonyltransferase activity role is filled by serine 652. Positions 942–1078 are N-terminal hotdog fold; sequence HDLLGSKVLG…GLIRIDEDVP (137 aa). The dehydratase (DH) domain stretch occupies residues 942-1241; that stretch reads HDLLGSKVLG…LSGLRYTRID (300 aa). The PKS/mFAS DH domain maps to 942–1246; that stretch reads HDLLGSKVLG…YTRIDTGPSV (305 aa). The active-site Proton acceptor; for dehydratase activity is histidine 974. A C-terminal hotdog fold region spans residues 1090–1246; the sequence is SHQVDASLWH…YTRIDTGPSV (157 aa). The active-site Proton donor; for dehydratase activity is aspartate 1154. Residues 1669–1985 form an enoyl reductase (ER) domain region; the sequence is GTTDSLIYSE…SANHIGKIVI (317 aa). The ketoreductase (KR) domain stretch occupies residues 2010–2187; sequence GYLLIGGLKG…NSVDLGAIQD (178 aa). One can recognise a Carrier domain in the interval 2294-2370; it reads AIHDAVIDVT…QLAQKIVARL (77 aa). Position 2330 is an O-(pantetheine 4'-phosphoryl)serine (serine 2330).

It depends on pantetheine 4'-phosphate as a cofactor.

The protein operates within mycotoxin biosynthesis. Its function is as follows. Highly reducing polyketide synthase; part of the gene cluster that mediates the biosynthesis of brefeldin A (BFA), a protein transport inhibitor that shows antiviral, antifungal, and antitumor properties. The proposed biosynthesis of BFA involves formation of an acyclic polyketide chain that is differentially tailored throughout the backbone. The highly reducing polyketide synthase Bref-PKS is proposed to synthesize the precisely reduced octaketide precursor, which could then be directly offloaded by the thiohydrolase enzyme Bref-TH followed by a cytochrome P450 monooxygenase-mediated formation of the cyclopentane ring and macrocyclization to afford 7-deoxy BFA. Alternatively, the first ring annulation can also occur on the ACP-tethered intermediate before the thiohydrolase release and lactonization. The C7-hydroxylation by another cytochrome P450 monooxygenase is believed to be the final step in the process to obtain the final structure of BFA. In addition to the HRPKS Bref-PKS and the thiohydrolase Bref-TH, the brefeldin A biosynthesis cluster contains 4 cytochrome p450 monooxygenases (called orf3 to orf6), as well a the probable cluster-specific transcription regulator orf8. This is Highly reducing polyketide synthase from Eupenicillium brefeldianum (Penicillium brefeldianum).